A 318-amino-acid polypeptide reads, in one-letter code: Transaldolase (318 aa).

The Schiff-base intermediate with substrate role is filled by K132.

It belongs to the transaldolase family. Type 1 subfamily. In terms of assembly, homodimer.

It is found in the cytoplasm. The enzyme catalyses D-sedoheptulose 7-phosphate + D-glyceraldehyde 3-phosphate = D-erythrose 4-phosphate + beta-D-fructose 6-phosphate. It participates in carbohydrate degradation; pentose phosphate pathway; D-glyceraldehyde 3-phosphate and beta-D-fructose 6-phosphate from D-ribose 5-phosphate and D-xylulose 5-phosphate (non-oxidative stage): step 2/3. Its function is as follows. Transaldolase is important for the balance of metabolites in the pentose-phosphate pathway. The protein is Transaldolase of Shewanella pealeana (strain ATCC 700345 / ANG-SQ1).